We begin with the raw amino-acid sequence, 190 residues long: Endoribonuclease YbeY (190 aa).

Residues 1–20 (MDVENDRPPRRGAAGERNSG) form a disordered region. Zn(2+)-binding residues include His147, His151, and His157.

Belongs to the endoribonuclease YbeY family. It depends on Zn(2+) as a cofactor.

Its subcellular location is the cytoplasm. Functionally, single strand-specific metallo-endoribonuclease involved in late-stage 70S ribosome quality control and in maturation of the 3' terminus of the 16S rRNA. This chain is Endoribonuclease YbeY, found in Nitrobacter hamburgensis (strain DSM 10229 / NCIMB 13809 / X14).